Here is an 849-residue protein sequence, read N- to C-terminus: Probable ubiquitin carboxyl-terminal hydrolase 1 (849 aa).

The region spanning 20-120 is the DUSP domain; that stretch reads QPASLPFQDS…EGLAIERKVL (101 aa). One can recognise a USP domain in the interval 279-848; that stretch reads CGLYNLGNSC…SAYVLFYRAK (570 aa). The Nucleophile role is filled by cysteine 288. Histidine 806 (proton acceptor) is an active-site residue.

Belongs to the peptidase C19 family.

The enzyme catalyses Thiol-dependent hydrolysis of ester, thioester, amide, peptide and isopeptide bonds formed by the C-terminal Gly of ubiquitin (a 76-residue protein attached to proteins as an intracellular targeting signal).. The chain is Probable ubiquitin carboxyl-terminal hydrolase 1 (ubp1) from Schizosaccharomyces pombe (strain 972 / ATCC 24843) (Fission yeast).